The primary structure comprises 591 residues: Mono(ADP-ribosyl)transferase SpvB (591 aa).

A TR mART core domain is found at 373–576 (PMMGGNSSRP…LRLSDDATAD (204 aa)). Catalysis depends on residues Arg471, Ser501, and Glu538.

Belongs to the SpvB family.

It localises to the secreted. It catalyses the reaction L-arginyl-[protein] + NAD(+) = N(omega)-(ADP-D-ribosyl)-L-arginyl-[protein] + nicotinamide + H(+). In terms of biological role, mono-ADP-ribosylates eukaryotic muscle and non-muscle actin on 'Arg-177'. ADP-ribosylation prevents the polymerization of G-actin to F-actin, causing actin filament depolymerization, destruction of the cytoskeleton and cytotoxicity. Does not possess NAD(+)-glycohydrolase activity, unlike most mART enzymes. This chain is Mono(ADP-ribosyl)transferase SpvB (spvB), found in Salmonella typhimurium (strain 14028s / SGSC 2262).